A 196-amino-acid polypeptide reads, in one-letter code: Probable peptidyl-prolyl cis-trans isomerase (196 aa).

The first 26 residues, M1–A26, serve as a signal peptide directing secretion. The PPIase cyclophilin-type domain occupies P29–D194.

This sequence belongs to the cyclophilin-type PPIase family.

The protein resides in the periplasm. The catalysed reaction is [protein]-peptidylproline (omega=180) = [protein]-peptidylproline (omega=0). PPIases accelerate the folding of proteins. It catalyzes the cis-trans isomerization of proline imidic peptide bonds in oligopeptides. The protein is Probable peptidyl-prolyl cis-trans isomerase (ppi) of Brucella abortus (strain 2308).